The following is a 497-amino-acid chain: Lysophospholipid acyltransferase 5 (497 aa).

6 helical membrane-spanning segments follow: residues 31-51, 74-94, 100-120, 173-193, 213-235, and 264-286; these read LLTI…ISVI, GLDT…VLLL, IFLA…YFYT, LELL…QFPF, AGVR…LRYL, and SLYK…GLTY. Catalysis depends on residues asparagine 322 and histidine 358. A helical membrane pass occupies residues 339–361; the sequence is FLNNRTISYGAALGFLAVWHGYH. Residue asparagine 398 is glycosylated (N-linked (GlcNAc...) asparagine). The next 2 membrane-spanning stretches (helical) occupy residues 408 to 428 and 435 to 455; these read FITL…AFVF and IVVY…WAAF. The disordered stretch occupies residues 469-497; it reads KLAGEDQKLQDSNTDKLVEEKKPEDKKSE. The segment covering 470–497 has biased composition (basic and acidic residues); that stretch reads LAGEDQKLQDSNTDKLVEEKKPEDKKSE. A Phosphoserine modification is found at serine 480.

The protein belongs to the membrane-bound acyltransferase family. In terms of tissue distribution, during gastrulation, expressed mainly along the midline in the presumptive mesoderm. During germ band elongation, expressed in mesoderm and endoderm primordia and in the cephalic furrow. Expression in mesoderm and endoderm lineages continues during germ band shortening. At the end of this process, no longer detected in somatic mesoderm or endoderm layer with expression restricted to anterior and posterior domains of the visceral mesoderm.

It localises to the endoplasmic reticulum. The protein resides in the membrane. It carries out the reaction a 1-acyl-sn-glycero-3-phospho-L-serine + an acyl-CoA = a 1,2-diacyl-sn-glycero-3-phospho-L-serine + CoA. It catalyses the reaction 1-(9Z-octadecenoyl)-sn-glycero-3-phospho-L-serine + (9Z)-hexadecenoyl-CoA = 1-(9Z-octadecenoyl)-2-(9Z-hexadecenoyl)-sn-glycero-3-phospho-L-serine + CoA. The enzyme catalyses a 1-acyl-sn-glycero-3-phosphocholine + an acyl-CoA = a 1,2-diacyl-sn-glycero-3-phosphocholine + CoA. The catalysed reaction is 1-hexadecanoyl-sn-glycero-3-phosphocholine + (9Z)-octadecenoyl-CoA = 1-hexadecanoyl-2-(9Z-octadecenoyl)-sn-glycero-3-phosphocholine + CoA. It carries out the reaction (9Z,12Z)-octadecadienoyl-CoA + 1-hexadecanoyl-sn-glycero-3-phosphocholine = 1-hexadecanoyl-2-(9Z,12Z-octadecadienoyl)-sn-glycero-3-phosphocholine + CoA. It catalyses the reaction (5Z,8Z,11Z,14Z)-eicosatetraenoyl-CoA + 1-hexadecanoyl-sn-glycero-3-phosphocholine = 1-hexadecanoyl-2-(5Z,8Z,11Z,14Z-eicosatetraenoyl)-sn-glycero-3-phosphocholine + CoA. The enzyme catalyses (9Z)-hexadecenoyl-CoA + 1-hexadecanoyl-sn-glycero-3-phosphocholine = 1-hexadecanoyl-2-(9Z-hexadecenoyl)-sn-glycero-3-phosphocholine + CoA. It participates in lipid metabolism; phospholipid metabolism. Its function is as follows. Acyltransferase that mediates the acylation of lysophospholipids to produce phospholipids (glycerophospholipids). Highest activity with lysophosphatidylcholine (1-acyl-sn-glycero-3-phosphocholine or LPC) producing phosphatidylcholine (1,2-diacyl-sn-glycero-3-phosphocholine or PC) (LPCAT activity), but also converts lysophosphatidylserine (1-acyl-2-hydroxy-sn-glycero-3-phospho-L-serine or LPS) to phosphatidylserine (1,2-diacyl-sn-glycero-3-phospho-L-serine or PS) (LPSAT activity). Has a preference for unsaturated fatty acids of at least 16 carbons such as oleoyl-CoA ((9Z)-octadecenoyl-CoA) and palmitoleoyl-CoA ((9Z)-hexadecenoyl-CoA). Glycerophospholipids are important structural and functional components of cellular membrane, acyl-chain remodeling regulates the molecular species distribution of glycerophospholipids which can affect membrane fluidity and curvature. Essential for fertility and viability together with Oysgedart (Oys). Required for germ cells to migrate into the mesoderm. The protein is Lysophospholipid acyltransferase 5 of Drosophila melanogaster (Fruit fly).